Consider the following 123-residue polypeptide: Large ribosomal subunit protein uL14c (123 aa).

The protein belongs to the universal ribosomal protein uL14 family. In terms of assembly, part of the 50S ribosomal subunit.

Its subcellular location is the plastid. The protein localises to the chloroplast. Binds to 23S rRNA. The sequence is that of Large ribosomal subunit protein uL14c from Oryza nivara (Indian wild rice).